Reading from the N-terminus, the 119-residue chain is Large ribosomal subunit protein uL18 (119 aa).

It belongs to the universal ribosomal protein uL18 family. As to quaternary structure, part of the 50S ribosomal subunit; part of the 5S rRNA/L5/L18/L25 subcomplex. Contacts the 5S and 23S rRNAs.

In terms of biological role, this is one of the proteins that bind and probably mediate the attachment of the 5S RNA into the large ribosomal subunit, where it forms part of the central protuberance. The protein is Large ribosomal subunit protein uL18 of Borrelia hermsii (strain HS1 / DAH).